Reading from the N-terminus, the 182-residue chain is Ribosome-recycling factor (182 aa).

The tract at residues 136–158 is disordered; sequence IKKQEKEGDLSEDQSRDEQDQVQ.

The protein belongs to the RRF family.

The protein resides in the cytoplasm. Its function is as follows. Responsible for the release of ribosomes from messenger RNA at the termination of protein biosynthesis. May increase the efficiency of translation by recycling ribosomes from one round of translation to another. The polypeptide is Ribosome-recycling factor (Synechococcus sp. (strain CC9311)).